The primary structure comprises 274 residues: MPKKDALDHLSLGQHTDYPNEYDPKQLQPVPRSLNREPIGLKDKLPFSGVDLWTGYEISWLNANGLPQVAVGYFAVPAESPNLIESKSFKLYLNSFNDSRFDTWEYVQQLMETDLSACAGTPVKVKLKQLSELEGESVATFPGHCIDDQNISISHYDYQPSLLATEQHETEEALHSHLLKSNCLITNQPDWGSVYIHYQGPKLDRAALLAYLVSFRRHNEFHEQCVERIYQDLKALGMKKLTVYARYTRRGGLDINPFRSDFEPALQMQRMARQ.

The segment at Met-1–Ser-33 is disordered. Ile-84–Ser-86 contributes to the substrate binding site. Position 86-87 (Ser-86–Lys-87) interacts with NADPH. Catalysis depends on Cys-183, which acts as the Thioimide intermediate. Catalysis depends on Asp-190, which acts as the Proton donor. His-222–Glu-223 is a substrate binding site. NADPH is bound at residue Arg-250 to Gly-251.

The protein belongs to the GTP cyclohydrolase I family. QueF type 2 subfamily. Homodimer.

The protein resides in the cytoplasm. The catalysed reaction is 7-aminomethyl-7-carbaguanine + 2 NADP(+) = 7-cyano-7-deazaguanine + 2 NADPH + 3 H(+). It functions in the pathway tRNA modification; tRNA-queuosine biosynthesis. Functionally, catalyzes the NADPH-dependent reduction of 7-cyano-7-deazaguanine (preQ0) to 7-aminomethyl-7-deazaguanine (preQ1). In Idiomarina loihiensis (strain ATCC BAA-735 / DSM 15497 / L2-TR), this protein is NADPH-dependent 7-cyano-7-deazaguanine reductase.